A 113-amino-acid chain; its full sequence is Protein NATD1 (113 aa).

Low complexity predominate over residues 1–16 (MAQSPAAASPGAPEQG). Residues 1 to 20 (MAQSPAAASPGAPEQGCPIR) are disordered. Residues 22-112 (EHDRRRRQFT…PLPQYLERLQ (91 aa)) enclose the N-acetyltransferase domain.

This sequence belongs to the NATD1 family.

In Bos taurus (Bovine), this protein is Protein NATD1 (NATD1).